We begin with the raw amino-acid sequence, 133 residues long: Salmonella pathogenicity island 2 protein C (133 aa).

Interacts with the mammalian NIPSNAP3A and HOOK3 proteins in infected cells.

Its subcellular location is the secreted. The protein localises to the cytoplasm. In terms of biological role, virulence protein that plays a central role in mammalian macrophage infection, by inhibiting phagosome-lysosome fusion and cellular trafficking, including trafficking of organelles that are devoid of Salmonella. May act by disrupting the function of the mammalian HOOK3 protein, a protein involved in the cellular traffic. Also required for actin ADP-ribosylase SpvB activity. The sequence is that of Salmonella pathogenicity island 2 protein C (spiC) from Salmonella typhimurium (strain 14028s / SGSC 2262).